The chain runs to 78 residues: Acyl carrier protein (78 aa).

The 76-residue stretch at 2–77 folds into the Carrier domain; it reads DNIVERVKKI…QAVDYILAGK (76 aa). Position 37 is an O-(pantetheine 4'-phosphoryl)serine (serine 37).

It belongs to the acyl carrier protein (ACP) family. Post-translationally, 4'-phosphopantetheine is transferred from CoA to a specific serine of apo-ACP by AcpS. This modification is essential for activity because fatty acids are bound in thioester linkage to the sulfhydryl of the prosthetic group.

The protein localises to the cytoplasm. Its pathway is lipid metabolism; fatty acid biosynthesis. In terms of biological role, carrier of the growing fatty acid chain in fatty acid biosynthesis. The chain is Acyl carrier protein from Dechloromonas aromatica (strain RCB).